The following is a 298-amino-acid chain: Nucleotide-binding protein MLBr00563 (298 aa).

21 to 28 (GLSGAGRG) is a binding site for ATP. 72–75 (DVRS) is a GTP binding site.

Belongs to the RapZ-like family.

Its function is as follows. Displays ATPase and GTPase activities. The polypeptide is Nucleotide-binding protein MLBr00563 (Mycobacterium leprae (strain Br4923)).